A 444-amino-acid polypeptide reads, in one-letter code: Ras-related protein RabX (444 aa).

GTP is bound at residue 29–36 (GGDVCSKN). The Effector region motif lies at 51 to 58 (LIQVFDDY). Position 73–77 (73–77 (EFSSI)) interacts with GTP. The disordered stretch occupies residues 91-136 (ENNKNKNNNNNYNYNNNNYNNNNNNNNNNNNNNNNNNNNNNNNNNS). Residues 95–135 (NKNNNNNYNYNNNNYNNNNNNNNNNNNNNNNNNNNNNNNNN) show a composition bias toward low complexity. Position 207-210 (207-210 (NDSN)) interacts with GTP. 2 disordered regions span residues 213–232 (TPNF…SNII) and 298–401 (LQGD…NNDL). Low complexity-rich tracts occupy residues 217–232 (SDSS…SNII) and 303–399 (NNNN…TYNN). The S-palmitoyl cysteine moiety is linked to residue cysteine 439. At cysteine 441 the chain carries Cysteine methyl ester. Residue cysteine 441 is the site of S-geranylgeranyl cysteine attachment. The propeptide at 442 to 444 (NLM) is removed in mature form.

This sequence belongs to the small GTPase superfamily. Rab family.

It localises to the cell membrane. This chain is Ras-related protein RabX (rabX), found in Dictyostelium discoideum (Social amoeba).